Here is a 201-residue protein sequence, read N- to C-terminus: 3-isopropylmalate dehydratase small subunit (201 aa).

Belongs to the LeuD family. LeuD type 1 subfamily. Heterodimer of LeuC and LeuD.

The catalysed reaction is (2R,3S)-3-isopropylmalate = (2S)-2-isopropylmalate. The protein operates within amino-acid biosynthesis; L-leucine biosynthesis; L-leucine from 3-methyl-2-oxobutanoate: step 2/4. Its function is as follows. Catalyzes the isomerization between 2-isopropylmalate and 3-isopropylmalate, via the formation of 2-isopropylmaleate. The polypeptide is 3-isopropylmalate dehydratase small subunit (Enterobacter sp. (strain 638)).